The sequence spans 60 residues: MAVPKFKPSKSRSRTRRSINMRKKIPQFQECSNCGNLAVRHRVCVKCGYYRNSQYLELGL.

This sequence belongs to the bacterial ribosomal protein bL32 family.

The protein is Large ribosomal subunit protein bL32 of Borrelia turicatae (strain 91E135).